Here is a 605-residue protein sequence, read N- to C-terminus: MLKRPAYYNIFLLPTGRRLAKTYNILENLITLPKTDWKLYETIEQKLKWMIQEYRSDWRDRLSHHERYGMKVRLTYRSESERTKLEEKITDLVISHGKKASTVHFCTRESYKGRVRANQILILLEPEGLGEVEGLTVRAEGNWMSLVTHCLFILGSTLTCFGFVDPARGCRFNLLPYIKTLHPNDKWLLDLQASWRLEYGVSRSIEEGALYDFFAESHTLYAVRTWPGCEKYLGALEAFVGRLAVLPAQVLTSKEHDFQSKLMSKAKKTGFHYLYYLVSFTMKTSLTDRIVKEALATVKVFSFVVGRDHLPAVGVYSGEDFSKQFLSMAVGTMDTPSRYAITIVSGMQVDVDVKSVTGIASFKDGTQHTIVDEILLQPARLVLLGRKGGGKSRLSKIFSELGYNVLDSDTYGKVLTLVADRGEDGLDDALKKFVRLTPDERKAVPSIFETEMDRLCEVFGSRGLRPYAQRCQQQAGRLHWELYAAFQEFYDRTIRVITPDKFRFAYFAELERGGFDDNGLTFSPELKTVVFVHSMPELFEAMGGCVAEIVPTHSTRLAILLRGQGLSVNAELHLHDFYVALNQNGARKVSLGWLVHALNELLKMR.

As to quaternary structure, interacts with VP1.

It is found in the virion. Its subcellular location is the host cytoplasm. It localises to the host cytoskeleton. Minor inner capsid component. Displays NTPase and RNA 5'-triphosphatase (RTPase) activities. May function as a cofactor of polymerase VP1. Associates with microtubules and plays a role in the formation, structural organization and morphology of viral inclusions, where the assembly of cores and the replication of viral RNA occur. The chain is Microtubule-associated protein VP10 from Colorado tick fever virus (strain USA/Florio N-7180) (CTFV).